The sequence spans 662 residues: Histidine decarboxylase (662 aa).

Substrate-binding residues include Tyr81 and His194. Lys305 carries the N6-(pyridoxal phosphate)lysine modification.

The protein belongs to the group II decarboxylase family. As to quaternary structure, homodimer. Pyridoxal 5'-phosphate serves as cofactor.

The catalysed reaction is L-histidine + H(+) = histamine + CO2. Its pathway is amine and polyamine biosynthesis; histamine biosynthesis; histamine from L-histidine: step 1/1. Functionally, catalyzes the biosynthesis of histamine from histidine. The polypeptide is Histidine decarboxylase (HDC) (Homo sapiens (Human)).